The chain runs to 1816 residues: Laminin subunit alpha-4 (1816 aa).

The signal sequence occupies residues 1–24; it reads MGWSTAWCSVLALWLLWCAVCSNA. Residue serine 39 is glycosylated (O-linked (Xyl...) (chondroitin sulfate) serine). Cystine bridges form between cysteine 82–cysteine 91, cysteine 84–cysteine 98, cysteine 101–cysteine 110, cysteine 113–cysteine 129, cysteine 132–cysteine 146, cysteine 134–cysteine 155, cysteine 157–cysteine 166, cysteine 169–cysteine 184, cysteine 187–cysteine 202, cysteine 189–cysteine 209, cysteine 212–cysteine 221, and cysteine 224–cysteine 238. Laminin EGF-like domains follow at residues 82–131, 132–186, and 187–240; these read CDCN…FCQP, CPCP…TCKK, and CDCS…NCAV. N-linked (GlcNAc...) asparagine glycosylation is present at asparagine 104. Residue asparagine 215 is glycosylated (N-linked (GlcNAc...) asparagine). The region spanning 241 to 255 is the Laminin EGF-like 4; truncated domain; the sequence is CNCGGGPCDSVTGEC. The tract at residues 256–825 is domain II and I; it reads LEEGFEVPTG…AQTRSVASKI (570 aa). Residues asparagine 308, asparagine 333, asparagine 458, asparagine 550, asparagine 571, asparagine 574, asparagine 631, and asparagine 639 are each glycosylated (N-linked (GlcNAc...) asparagine). The stretch at 431–523 forms a coiled coil; it reads THRELVDEEA…ERVKEQMEVV (93 aa). The stretch at 556 to 604 forms a coiled coil; the sequence is AEIDGAKNELQGKLSNLSNLSHDLVQEATDHAYNLQQEADELSRNLHSS. Residues 655–717 are a coiled coil; sequence IIYHKDESDN…AVKQLQAAER (63 aa). The short motif at 717–719 is the Cell attachment site element; that stretch reads RGD. 5 N-linked (GlcNAc...) asparagine glycosylation sites follow: asparagine 735, asparagine 751, asparagine 754, asparagine 780, and asparagine 803. The stretch at 770–799 forms a coiled coil; it reads AVDSARDAVRNLTEVVPQLLDQLRTVEQKR. 3 Laminin G-like domains span residues 826-1030, 1042-1222, and 1229-1397; these read QVSM…SVPC, AASY…GYGC, and SRRA…LYEC. Cysteine 1000 and cysteine 1030 are joined by a disulfide. N-linked (GlcNAc...) asparagine glycosylation is present at asparagine 1088. Cysteines 1196 and 1222 form a disulfide. N-linked (GlcNAc...) asparagine glycosylation is found at asparagine 1283 and asparagine 1361. Cysteines 1365 and 1397 form a disulfide. The span at 1409–1419 shows a compositional bias: basic residues; that stretch reads KKGKNSSKPKT. The tract at residues 1409–1433 is disordered; that stretch reads KKGKNSSKPKTNKQGEKSKDAPSWD. Residues 1421–1430 show a composition bias toward basic and acidic residues; sequence KQGEKSKDAP. Laminin G-like domains follow at residues 1462-1633 and 1640-1813; these read AYQY…VTPC and TGTY…INSC. 2 disulfide bridges follow: cysteine 1610–cysteine 1633 and cysteine 1785–cysteine 1813.

In terms of assembly, laminin is a complex glycoprotein, consisting of three different polypeptide chains (alpha, beta, gamma), which are bound to each other by disulfide bonds into a cross-shaped molecule comprising one long and three short arms with globules at each end. Alpha-4 is a subunit of laminin-8 (laminin-411), laminin-9 (laminin-421) and laminin-14 (laminin-423). In terms of tissue distribution, strongly expressed in peripheral nerves, cardiac muscle, fat, dermis, lung stroma, aortic endothelium, endocardium and endothelium of blood vessels in skin and brain.

It is found in the secreted. The protein resides in the extracellular space. Its subcellular location is the extracellular matrix. It localises to the basement membrane. Binding to cells via a high affinity receptor, laminin is thought to mediate the attachment, migration and organization of cells into tissues during embryonic development by interacting with other extracellular matrix components. The protein is Laminin subunit alpha-4 (Lama4) of Mus musculus (Mouse).